A 275-amino-acid chain; its full sequence is Fructose-2,6-bisphosphatase TIGAR (275 aa).

Residue H11 is the Tele-phosphohistidine intermediate of the active site. E89 (proton donor/acceptor) is an active-site residue.

The protein belongs to the phosphoglycerate mutase family.

The protein resides in the cytoplasm. The protein localises to the nucleus. It is found in the mitochondrion. It carries out the reaction beta-D-fructose 2,6-bisphosphate + H2O = beta-D-fructose 6-phosphate + phosphate. In terms of biological role, fructose-bisphosphatase hydrolyzing fructose-2,6-bisphosphate as well as fructose-1,6-bisphosphate. Acts as a negative regulator of glycolysis by lowering intracellular levels of fructose-2,6-bisphosphate in a p53/TP53-dependent manner, resulting in the pentose phosphate pathway (PPP) activation and NADPH production. Contributes to the generation of reduced glutathione to cause a decrease in intracellular reactive oxygen species (ROS) content, correlating with its ability to protect cells from oxidative or metabolic stress-induced cell death. May play a role in mitophagy inhibition. The chain is Fructose-2,6-bisphosphatase TIGAR from Xenopus laevis (African clawed frog).